A 313-amino-acid polypeptide reads, in one-letter code: tRNA dimethylallyltransferase (313 aa).

10–17 (GPTASGKT) contacts ATP. Residue 12-17 (TASGKT) participates in substrate binding. Interaction with substrate tRNA stretches follow at residues 35–38 (DSAM), 159–163 (QRIQR), and 240–245 (RCVGYR).

It belongs to the IPP transferase family. Monomer. Requires Mg(2+) as cofactor.

It carries out the reaction adenosine(37) in tRNA + dimethylallyl diphosphate = N(6)-dimethylallyladenosine(37) in tRNA + diphosphate. Catalyzes the transfer of a dimethylallyl group onto the adenine at position 37 in tRNAs that read codons beginning with uridine, leading to the formation of N6-(dimethylallyl)adenosine (i(6)A). This chain is tRNA dimethylallyltransferase, found in Legionella pneumophila (strain Corby).